A 539-amino-acid chain; its full sequence is F-box only protein 31 (539 aa).

Positions 11–53 (GPSRGCRRRQQRRGPAETAAADSEPDTDPEEERIEASAGVGGG) are disordered. Phosphoserine is present on Ser-33. Residue Ser-33 is modified to Phosphoserine; by PKB/AKT1. Acidic residues predominate over residues 33–43 (SEPDTDPEEER). A Phosphothreonine modification is found at Thr-37. A D box motif is present at residues 64 to 69 (RCSLLE). The F-box domain occupies 64–110 (RCSLLELPPELLVEIFASLPGTDLPSLAQVCTKFRRILHTDTIWRRR). Zn(2+) is bound by residues Cys-206, His-214, Cys-230, and His-236. Ser-278 is modified (phosphoserine; by ATM). The DDL motif motif lies at 297-299 (DDL). A compositionally biased stretch (basic and acidic residues) spans 377-397 (VRQEQQEGGHEAGEGRGRQGP). Positions 377–446 (VRQEQQEGGH…PAQCGQGQPF (70 aa)) are disordered. Thr-419 carries the phosphothreonine; by MTOR modification. Ser-480 is modified (phosphoserine).

It belongs to the FBXO31 family. Part of a SCF (SKP1-cullin-F-box) protein ligase complex SCF(FBXO31) composed of CUL1, SKP1, RBX1 and FBXO31. Interacts (when phosphorylated at Ser-33) with CDC20, promoting ubiquitination by the APC/C complex. Post-translationally, phosphorylation at Ser-278 by ATM following gamma-irradiation results in its stabilization. Phosphorylation at Thr-419 and Ser-480 in absence of stress promotes its ubiquitination and degradation by the SCF(FBXO46) complex. Phosphorylation at Ser-33 by AKT1 promotes association with CDC20 and ubiquitination by the APC/C complex. Ubiquitinated by the SCF(FBXO46) complex in absence of stress, promoting its degradation. Ubiquitinated by the APC/C complex following phosphorylation at Ser-33, leading to its degradation by the proteasome. As to expression, highly expressed in brain. Expressed at moderate levels in most tissues, except bone marrow.

It is found in the cytoplasm. The protein localises to the cytoskeleton. Its subcellular location is the microtubule organizing center. The protein resides in the centrosome. Its pathway is protein modification; protein ubiquitination. Substrate-recognition component of the SCF(FBXO31) protein ligase complex, which specifically mediates the ubiquitination of proteins amidated at their C-terminus in response to oxidative stress, leading to their degradation by the proteasome. FBXO31 specifically recognizes and binds C-terminal peptides bearing an amide: C-terminal amidation in response to oxidative stress takes place following protein fragmentation. The SCF(FBXO31) also plays a role in G1 arrest following DNA damage by mediating ubiquitination of phosphorylated cyclin-D1 (CCND1), promoting its degradation by the proteasome, resulting in G1 arrest. The SCF(FBXO31) complex is however not a major regulator of CCND1 stability during the G1/S transition. In response to genotoxic stress, the SCF(FBXO31) complex directs ubiquitination and degradation of phosphorylated MDM2, thereby promoting p53/TP53-mediated DNA damage response. SCF(FBXO31) complex is required for genomic integrity by catalyzing ubiquitination and degradation of cyclin-A (CCNA1 and/or CCNA2) during the G1 phase. In response to genotoxic stress, the SCF(FBXO31) complex directs ubiquitination and degradation of phosphorylated FBXO46 and MAP2K6. SCF(FBXO31) complex promotes ubiquitination and degradation of CDT1 during the G2 phase to prevent re-replication. The SCF(FBXO31) complex also mediates ubiquitination and degradation of DUSP6, OGT and PARD6A. The chain is F-box only protein 31 from Homo sapiens (Human).